The primary structure comprises 234 residues: uncharacterized protein (234 aa).

2 helical membrane-spanning segments follow: residues Leu20–Ile40 and Val176–Leu196.

It belongs to the CpsC/CapA family.

Its subcellular location is the cell membrane. This is an uncharacterized protein from Bacillus subtilis (strain 168).